The sequence spans 160 residues: Transcription elongation factor GreA (160 aa).

A coiled-coil region spans residues 10-37; it reads TLDGKAKLENELQELKTVKRKEVVERIK.

This sequence belongs to the GreA/GreB family.

In terms of biological role, necessary for efficient RNA polymerase transcription elongation past template-encoded arresting sites. The arresting sites in DNA have the property of trapping a certain fraction of elongating RNA polymerases that pass through, resulting in locked ternary complexes. Cleavage of the nascent transcript by cleavage factors such as GreA or GreB allows the resumption of elongation from the new 3'terminus. GreA releases sequences of 2 to 3 nucleotides. This is Transcription elongation factor GreA from Listeria innocua serovar 6a (strain ATCC BAA-680 / CLIP 11262).